The following is a 957-amino-acid chain: MTQTLSQLENSGAFIERHIGPDAAQQQEMLNAVGAQSLNALTGQIVPKDIQLATPPQVGAPATEYAALAELKAIASRNKRFTSYIGMGYTAVQLPPVILRNMLENPGWYTAYTPYQPEVSQGRLEALLNFQQVTLDLTGLDMASASLLDEATAAAEAMAMAKRVSKLKNANRFFVASDVHPQTLDVVRTRAETFGFEVIVDDAQKVLDHQDVFGVLLQQVGTTGEIHDYTALISELKSRKIVVSVAADIMALVLLTAPGKQGADIVFGSAQRFGVPMGYGGPHAAFFAAKDEYKRSMPGRIIGVSKDAAGNTALRMAMQTREQHIRREKANSNICTSQVLLANIASLYAVYHGPVGLKRIANRIHRLTDILAAGLQQKGLKLRHAHYFDTLCVEVADKAGVLTRAEAAEINLRSDILNAVGITLDETTTRENVMQLFNVLLGDNHGLDIDTLDKDVAHDSRSIQPAMLRDDEILTHPVFNRYHSETEMMRYMHSLERKDLALNQAMIPLGSCTMKLNAAAEMIPITWPEFAELHPFCPPEQAEGYQQMIAQLADWLVKLTGYDAVCMQPNSGAQGEYAGLLAIRHYHESRNEGHRDICLIPASAHGTNPASAHMAGMQVVVVACDKNGNIDLTDLRAKAEQAGDNLSCIMVTYPSTHGVYEETIREVCEVVHQFGGQVYLDGANMNAQVGITSPGFIGADVSHLNLHKTFCIPHGGGGPGMGPIGVKAHLAPFVPGHSVVQIEGMLTRQGAVSAAPFGSASILPISWMYIRMMGAEGLKKASQVAILNANYIASRLQDAFPVLYTGRDGRVAHECILDIRPLKEETGISELDIAKRLIDYGFHAPTMSFPVAGTLMVEPTESESKVELDRFIDAMLAIRAEIDQVKAGVWPLEDNPLVNAPHIQSELVAEWAHPYSREVAVFPAGVADKYWPTVKRLDDVYGDRNLFCSCVPISEYQ.

Position 708 is an N6-(pyridoxal phosphate)lysine (Lys-708).

The protein belongs to the GcvP family. As to quaternary structure, the glycine cleavage system is composed of four proteins: P, T, L and H. The cofactor is pyridoxal 5'-phosphate.

It carries out the reaction N(6)-[(R)-lipoyl]-L-lysyl-[glycine-cleavage complex H protein] + glycine + H(+) = N(6)-[(R)-S(8)-aminomethyldihydrolipoyl]-L-lysyl-[glycine-cleavage complex H protein] + CO2. In terms of biological role, the glycine cleavage system catalyzes the degradation of glycine. The P protein binds the alpha-amino group of glycine through its pyridoxal phosphate cofactor; CO(2) is released and the remaining methylamine moiety is then transferred to the lipoamide cofactor of the H protein. The sequence is that of Glycine dehydrogenase (decarboxylating) from Escherichia coli (strain K12 / MC4100 / BW2952).